The primary structure comprises 365 residues: tRNA-specific 2-thiouridylase MnmA (365 aa).

ATP contacts are provided by residues 12–19 and methionine 38; that span reads AMSGGVDS. Residue cysteine 108 is the Nucleophile of the active site. Cysteines 108 and 206 form a disulfide. Glycine 132 provides a ligand contact to ATP. The interaction with tRNA stretch occupies residues 156–158; the sequence is KDQ. Cysteine 206 serves as the catalytic Cysteine persulfide intermediate. An interaction with tRNA region spans residues 312-313; sequence RY.

The protein belongs to the MnmA/TRMU family.

It localises to the cytoplasm. It catalyses the reaction S-sulfanyl-L-cysteinyl-[protein] + uridine(34) in tRNA + AH2 + ATP = 2-thiouridine(34) in tRNA + L-cysteinyl-[protein] + A + AMP + diphosphate + H(+). In terms of biological role, catalyzes the 2-thiolation of uridine at the wobble position (U34) of tRNA, leading to the formation of s(2)U34. This is tRNA-specific 2-thiouridylase MnmA from Carboxydothermus hydrogenoformans (strain ATCC BAA-161 / DSM 6008 / Z-2901).